We begin with the raw amino-acid sequence, 101 residues long: MTSKLAIALLAAFLLSAALCKAAVLSRMTSELRCQCINIHSTPFHPKFIRELRVIESGPHCENSEIIVKLVNGKEVCLNPKEKWVQKVVQIFLKRAEKKDP.

Positions 1-22 (MTSKLAIALLAAFLLSAALCKA) are cleaved as a signal peptide. Arg27 carries the citrulline modification. 2 cysteine pairs are disulfide-bonded: Cys34/Cys61 and Cys36/Cys77.

Belongs to the intercrine alpha (chemokine CxC) family. Homodimer. In terms of processing, citrullination at Arg-27 prevents proteolysis, and dampens tissue inflammation, it also enhances leukocytosis, possibly through impaired chemokine clearance from the blood circulation.

Its subcellular location is the secreted. In terms of biological role, chemotactic factor that mediates inflammatory response by attracting neutrophils, basophils, and T-cells to clear pathogens and protect the host from infection. Also plays an important role in neutrophil activation. Released in response to an inflammatory stimulus, exerts its effect by binding to the G-protein-coupled receptors CXCR1 and CXCR2, primarily found in neutrophils, monocytes and endothelial cells. G-protein heterotrimer (alpha, beta, gamma subunits) constitutively binds to CXCR1/CXCR2 receptor and activation by IL8 leads to beta and gamma subunits release from Galpha (GNAI2 in neutrophils) and activation of several downstream signaling pathways including PI3K and MAPK pathways. The polypeptide is Interleukin-8 (CXCL8) (Tursiops truncatus (Atlantic bottle-nosed dolphin)).